The chain runs to 675 residues: Cysteine-rich receptor-like protein kinase 25 (675 aa).

Positions 1–25 (MSSCFKSSVSLFSVFLFMILKTVTS) are cleaved as a signal peptide. The Extracellular portion of the chain corresponds to 26–281 (DPTYLYHICP…IPSEKGKGKN (256 aa)). Gnk2-homologous domains follow at residues 28-134 (TYLY…NQSI) and 140-247 (IRPG…LYPF). N-linked (GlcNAc...) asparagine glycans are attached at residues Asn-36, Asn-43, Asn-77, Asn-106, Asn-131, Asn-151, Asn-161, Asn-188, Asn-249, and Asn-281. A helical membrane pass occupies residues 282–302 (LTVIVTAIAVPVSVCVLLLGA). Residues 303-675 (MCWLLARRRN…DSSITIVYPR (373 aa)) lie on the Cytoplasmic side of the membrane. Residues 347-622 (FSESNKLGHG…DILVMMNSFT (276 aa)) form the Protein kinase domain. ATP-binding positions include 353–361 (LGHGGFGEV) and Lys-375. A Phosphotyrosine modification is found at Tyr-420. The active-site Proton acceptor is the Asp-472. Ser-476 carries the phosphoserine modification. The residue at position 512 (Thr-512) is a Phosphothreonine. At Tyr-520 the chain carries Phosphotyrosine. A disordered region spans residues 638–661 (MKDSRDPRSGGSASDHSATSKSLP). Polar residues predominate over residues 648–661 (GSASDHSATSKSLP).

This sequence belongs to the protein kinase superfamily. Ser/Thr protein kinase family. CRK subfamily.

Its subcellular location is the membrane. It carries out the reaction L-seryl-[protein] + ATP = O-phospho-L-seryl-[protein] + ADP + H(+). It catalyses the reaction L-threonyl-[protein] + ATP = O-phospho-L-threonyl-[protein] + ADP + H(+). The chain is Cysteine-rich receptor-like protein kinase 25 (CRK25) from Arabidopsis thaliana (Mouse-ear cress).